The chain runs to 519 residues: Cell division cycle protein 20 homolog B (519 aa).

The span at Gln79–Tyr98 shows a compositional bias: polar residues. Positions Gln79–Ser133 are disordered. Over residues Pro110 to Leu125 the composition is skewed to basic and acidic residues. WD repeat units follow at residues Arg229 to Asn266, Leu271 to Asn310, Met311 to Asp341, Arg353 to Gly392, Thr399 to Thr441, Ser443 to Gly484, and Gly487 to Tyr519.

It belongs to the WD repeat CDC20/Fizzy family. Expressed in multiciliated cells (MCCs).

It is found in the cytoplasm. Functionally, protein regulator of centriole-deuterosome disengagement and subsequently participates in the ciliogenesis in multiciliated cells (MCCs). The polypeptide is Cell division cycle protein 20 homolog B (Homo sapiens (Human)).